The chain runs to 253 residues: 3-dehydroquinate dehydratase (253 aa).

Residues 46 to 48 (EFR) and Arg-82 each bind 3-dehydroquinate. His-143 functions as the Proton donor/acceptor in the catalytic mechanism. The active-site Schiff-base intermediate with substrate is the Lys-170. Positions 213, 232, and 236 each coordinate 3-dehydroquinate.

The protein belongs to the type-I 3-dehydroquinase family. In terms of assembly, homodimer.

It catalyses the reaction 3-dehydroquinate = 3-dehydroshikimate + H2O. It functions in the pathway metabolic intermediate biosynthesis; chorismate biosynthesis; chorismate from D-erythrose 4-phosphate and phosphoenolpyruvate: step 3/7. Functionally, involved in the third step of the chorismate pathway, which leads to the biosynthesis of aromatic amino acids. Catalyzes the cis-dehydration of 3-dehydroquinate (DHQ) and introduces the first double bond of the aromatic ring to yield 3-dehydroshikimate. The polypeptide is 3-dehydroquinate dehydratase (Clostridium novyi (strain NT)).